A 318-amino-acid polypeptide reads, in one-letter code: 2-keto-3-deoxygluconate permease (318 aa).

Helical transmembrane passes span 10–30, 42–62, 76–96, 105–125, 139–159, 162–182, 199–219, 224–244, 263–283, and 289–309; these read IPGG…TFTP, GLIT…GASI, VLVI…GTFL, LLAG…NGGL, AGAF…VILG, GIAT…LIGF, VQTL…LAVI, FAGI…LIIA, AGAA…FAPV, and ALVA…TALW.

Belongs to the KdgT transporter family.

It is found in the cell inner membrane. The enzyme catalyses 2-dehydro-3-deoxy-D-gluconate(in) + H(+)(in) = 2-dehydro-3-deoxy-D-gluconate(out) + H(+)(out). Its function is as follows. Catalyzes the proton-dependent uptake of 2-keto-3-deoxygluconate (KDG) into the cell. The sequence is that of 2-keto-3-deoxygluconate permease from Pectobacterium carotovorum subsp. carotovorum (strain PC1).